The chain runs to 207 residues: 3-demethoxyubiquinol 3-hydroxylase (207 aa).

Fe cation is bound by residues E56, E86, H89, E138, E170, and H173.

Belongs to the COQ7 family. Fe cation is required as a cofactor.

The protein localises to the cell membrane. It catalyses the reaction a 5-methoxy-2-methyl-3-(all-trans-polyprenyl)benzene-1,4-diol + AH2 + O2 = a 3-demethylubiquinol + A + H2O. Its pathway is cofactor biosynthesis; ubiquinone biosynthesis. Its function is as follows. Catalyzes the hydroxylation of 2-nonaprenyl-3-methyl-6-methoxy-1,4-benzoquinol during ubiquinone biosynthesis. The protein is 3-demethoxyubiquinol 3-hydroxylase of Dechloromonas aromatica (strain RCB).